A 231-amino-acid chain; its full sequence is ATP-dependent dethiobiotin synthetase BioD 2 (231 aa).

Residue 13–18 coordinates ATP; that stretch reads SVGKTV. Threonine 17 contributes to the Mg(2+) binding site. Lysine 38 is a catalytic residue. Residues aspartate 55, 112 to 115, 172 to 173, 201 to 203, and glutamine 208 each bind ATP; these read EGTG, NR, and PYL. Aspartate 55 and glutamate 112 together coordinate Mg(2+).

It belongs to the dethiobiotin synthetase family. Homodimer. The cofactor is Mg(2+).

The protein localises to the cytoplasm. It carries out the reaction (7R,8S)-7,8-diammoniononanoate + CO2 + ATP = (4R,5S)-dethiobiotin + ADP + phosphate + 3 H(+). Its pathway is cofactor biosynthesis; biotin biosynthesis; biotin from 7,8-diaminononanoate: step 1/2. Functionally, catalyzes a mechanistically unusual reaction, the ATP-dependent insertion of CO2 between the N7 and N8 nitrogen atoms of 7,8-diaminopelargonic acid (DAPA, also called 7,8-diammoniononanoate) to form a ureido ring. The chain is ATP-dependent dethiobiotin synthetase BioD 2 from Salmonella typhimurium (strain LT2 / SGSC1412 / ATCC 700720).